Consider the following 358-residue polypeptide: Gibberellin receptor GID1B (358 aa).

At alanine 2 the chain carries N-acetylalanine. Residues 113-115 carry the Involved in the stabilization of the negatively charged intermediate by the formation of the oxyanion hole motif; sequence HGG. Residues 115-116, tyrosine 127, and serine 191 each bind gibberellin A4; that span reads GS. Residues serine 116, tyrosine 127, serine 191, and phenylalanine 238 each contribute to the gibberellin A3 site. Serine 191 is an active-site residue. Aspartate 289 is a catalytic residue. Residue glycine 320 participates in gibberellin A4 binding. Glycine 320 provides a ligand contact to gibberellin A3.

This sequence belongs to the 'GDXG' lipolytic enzyme family. Interacts with the DELLA proteins GAI, RGA, RGL1, RGL2 and RGL3 in a GA-dependent manner. Widely expressed.

The protein resides in the nucleus. In terms of biological role, functions as a soluble gibberellin (GA) receptor. GA is an essential hormone that regulates growth and development in plants. Binds with high affinity the biologically active gibberellin GA4, but has no affinity for the biologically inactive GAs. In response to GA, interacts with specific DELLA proteins, known as repressors of GA-induced growth, and targets them for degradation via proteasome. Seems to be required for GA signaling that controls root growth, seed germination and flower development. May function as a dominant GA receptor at low GA concentrations in germination. Partially redundant with GID1A and GID1C. The sequence is that of Gibberellin receptor GID1B (GID1B) from Arabidopsis thaliana (Mouse-ear cress).